We begin with the raw amino-acid sequence, 684 residues long: RNA helicase NPH-II (684 aa).

Residues 184–359 enclose the Helicase ATP-binding domain; it reads FRAWAARRPT…EFFPDAEFVH (176 aa). 197–204 serves as a coordination point for ATP; it reads GGTGVGKT. The short motif at 308–311 is the DEXH box element; sequence DEVH. In terms of domain architecture, Helicase C-terminal spans 392-563; sequence NVSAALSAHR…DLYVQPSDLE (172 aa).

The protein belongs to the DEAD box helicase family. DEAH subfamily. As to quaternary structure, monomer.

It is found in the virion. The enzyme catalyses ATP + H2O = ADP + phosphate + H(+). NTP-dependent helicase that catalyzes unidirectional unwinding of 3'tailed duplex RNAs and plays an important role during transcription of early mRNAs, presumably by preventing R-loop formation behind the elongating RNA polymerase. Might also play a role in the export of newly synthesized mRNA chains out of the core into the cytoplasm. Required for replication and propagation of viral particles. The chain is RNA helicase NPH-II (NPH2) from Homo sapiens (Human).